A 1161-amino-acid chain; its full sequence is BMP-2-inducible protein kinase (1161 aa).

Residues 1–20 (MKKFSRMPKSEGGSGGGAAG) are disordered. S14 carries the post-translational modification Phosphoserine. Residues 51–316 (VTLEESLAEG…DIFQVSYFAF (266 aa)) enclose the Protein kinase domain. ATP is bound by residues 57–65 (LAEGGFSTV) and K79. D180 acts as the Proton acceptor in catalysis. Disordered regions lie at residues 358 to 439 (TDTI…RVLQ), 453 to 495 (LQHR…HHHL), 610 to 630 (TNQKNISNPPDMSGWNPFGED), and 655 to 832 (ERAS…TQDL). Polar residues predominate over residues 361-394 (IGPTETSIAPRQRPKANSATTATPSVLTIQSSAT). Composition is skewed to low complexity over residues 422 to 439 (LLGQGPPQQPPQQHRVLQ) and 460 to 485 (QQQQQQQQQQQQQQQQQQQQQQQQQQ). A compositionally biased stretch (polar residues) spans 610-619 (TNQKNISNPP). S689 is subject to Phosphoserine. Composition is skewed to polar residues over residues 697 to 718 (SSINQENGTANPIKNGKTSPAS) and 726 to 735 (KTSVQGQVQK). The residue at position 742 (S742) is a Phosphoserine. Residues 755-779 (EEEEQDDEEVLQGEQGDFNDDDTEP) are compositionally biased toward acidic residues. Basic and acidic residues predominate over residues 798–813 (EKHSSDSDYEQAKAKY). S817 and S818 each carry phosphoserine. T834 is modified (phosphothreonine). S928 is subject to Phosphoserine. Residues 965 to 1035 (SQQQKVKQRS…RRDSQSSNEF (71 aa)) are disordered. Basic residues predominate over residues 970-984 (VKQRSLQKLSSRQRR). Residues 1000-1011 (TPTSTKKTLKPT) show a composition bias toward low complexity. Phosphoserine is present on residues S1029, S1031, S1032, S1039, S1041, S1076, S1107, and S1111. A compositionally biased stretch (polar residues) spans 1137–1146 (TPHQSQQSQP). The tract at residues 1137 to 1161 (TPHQSQQSQPVELDPFGAAPFPSKQ) is disordered.

Belongs to the protein kinase superfamily. Ser/Thr protein kinase family. In terms of processing, autophosphorylated.

Its subcellular location is the nucleus. The catalysed reaction is L-seryl-[protein] + ATP = O-phospho-L-seryl-[protein] + ADP + H(+). It catalyses the reaction L-threonyl-[protein] + ATP = O-phospho-L-threonyl-[protein] + ADP + H(+). Functionally, may be involved in osteoblast differentiation. The sequence is that of BMP-2-inducible protein kinase (BMP2K) from Homo sapiens (Human).